The chain runs to 44 residues: Protein PsbN (44 aa).

A helical membrane pass occupies residues 6-26; the sequence is FFFTIFVWFLLISVTGYSIYV.

Belongs to the PsbN family.

The protein localises to the plastid. Its subcellular location is the chloroplast thylakoid membrane. May play a role in photosystem I and II biogenesis. This Bigelowiella natans (Pedinomonas minutissima) protein is Protein PsbN.